Reading from the N-terminus, the 234-residue chain is MSVPTLPTGPTVDLAQAAERLIKGRRAVRAFRPDEVPEETMRAVFELAGHAPSNSNTQPWHVEVVSGAARDRLAEALVTAHAEERVTVDFPYREGLFQGVLQERRADFGSRLYAALGIARDQTDLLQGYNTESLRFYGAPHVAMLFAPNNTEARIAGDMGIYAQTLMLAMTAHGIASCPQALLSFYADTVRAELGVENRKLLMGISFGYADDTAAVNGVRIPRAGLSETTRFSR.

FMN is bound at residue 25 to 29 (RRAVR). Residues serine 55, arginine 105, tyrosine 113, and isoleucine 118 each contribute to the NADP(+) site. Residues tyrosine 137, 181–182 (AL), and arginine 223 contribute to the FMN site.

This sequence belongs to the nitroreductase family. As to quaternary structure, homodimer. FMN is required as a cofactor.

Its function is as follows. Confers resistance to antitubercular drugs benzothiazinone (BTZ) and dinitrobenzamide (DNB). Inactivates BTZ and DNB by reducing an essential nitro group of these compounds to amino group or to hydroxyl amine, respectively, using NADH or NADPH as source of reducing equivalents; two electrons are transferred. Able to reduce the nitro group of bicyclic nitroimidazole PA-824, but not of quinone menadione, nitrofurazone, methyl-4-nitrobenzoate, 4-nitrobenzene methyl sulfonate or 4-nitroacetophenone. The protein is Nitroreductase NfnB of Mycolicibacterium smegmatis (strain ATCC 700084 / mc(2)155) (Mycobacterium smegmatis).